Consider the following 97-residue polypeptide: Ig heavy chain V region 914 (97 aa).

The Ig-like domain maps to 1-97; sequence EVKLVESGGG…EDTAMYYCAR (97 aa).

This Mus musculus (Mouse) protein is Ig heavy chain V region 914.